Here is a 675-residue protein sequence, read N- to C-terminus: Zinc finger protein 526 (675 aa).

C2H2-type zinc fingers lie at residues 56 to 78 (FMCS…QEQH), 108 to 130 (FQCG…QDAH), and 140 to 163 (YQCG…KTQH). The interval 160-195 (KTQHLSSAADEPPSPLPPPTPPPPPPPPPPPPPPEV) is disordered. Residues 171–194 (PPSPLPPPTPPPPPPPPPPPPPPE) show a composition bias toward pro residues. The C2H2-type 4 zinc finger occupies 200-222 (YECPECSTLCATPEEFLEHQGTH). Residues 225–234 (SLEKEEHNGL) are compositionally biased toward basic and acidic residues. Residues 225 to 283 (SLEKEEHNGLEEEEEDEEEGEEEEDDDDEETDEEEASSELTADDTGSNKSTADSAQSCG) form a disordered region. The segment covering 235 to 261 (EEEEEDEEEGEEEEDDDDEETDEEEAS) has biased composition (acidic residues). Polar residues predominate over residues 269 to 281 (TGSNKSTADSAQS). 4 C2H2-type zinc fingers span residues 312–334 (FHCS…GRAH), 339–361 (HECT…QRLH), 367–389 (YLCV…RRAH), and 395–416 (HRCR…RRTH). The tract at residues 415 to 439 (THTGKSGTPTRVATVSPAPAEPTPP) is disordered. The segment covering 418–427 (GKSGTPTRVA) has biased composition (polar residues). C2H2-type zinc fingers lie at residues 447–470 (LPCP…RAVH), 477–499 (HRCG…LRTH), 505–527 (FQCH…QLTH), 533–555 (YQCL…RRLH), and 578–600 (YYCG…QRVH). Residues 606 to 625 (LTLQPPRSPSPVPPPPPEPQ) are disordered. Positions 611–624 (PRSPSPVPPPPPEP) are enriched in pro residues.

This sequence belongs to the krueppel C2H2-type zinc-finger protein family.

It localises to the nucleus. May be involved in transcriptional regulation. The sequence is that of Zinc finger protein 526 (Znf526) from Mus musculus (Mouse).